The following is a 234-amino-acid chain: MTQQLNVDPAEIKKFEDMASRWWDLEGEFKPLHQINPLRLNYVLENANGLFGKKVLDVGCGGGILAESMAKQGADVVGLDMGKEPLTVARLHALETGTKLEYVQSTAEQHAEENPETYDVVTCMEMLEHVPDPLSVIRSCAKMVKPGGHVFFSTLNRNIKSYLFAIVGAEQLLKLVPKGTHDHNKFIRPSELLKMLDQTALQERGITGLHYNPLTDTYSLGKNVDVNYIVHTTL.

S-adenosyl-L-methionine is bound by residues R39, G59, D80, and M124.

This sequence belongs to the methyltransferase superfamily. UbiG/COQ3 family.

It carries out the reaction a 3-demethylubiquinol + S-adenosyl-L-methionine = a ubiquinol + S-adenosyl-L-homocysteine + H(+). The enzyme catalyses a 3-(all-trans-polyprenyl)benzene-1,2-diol + S-adenosyl-L-methionine = a 2-methoxy-6-(all-trans-polyprenyl)phenol + S-adenosyl-L-homocysteine + H(+). Its pathway is cofactor biosynthesis; ubiquinone biosynthesis. In terms of biological role, O-methyltransferase that catalyzes the 2 O-methylation steps in the ubiquinone biosynthetic pathway. The sequence is that of Ubiquinone biosynthesis O-methyltransferase from Aliivibrio fischeri (strain MJ11) (Vibrio fischeri).